Reading from the N-terminus, the 1166-residue chain is MSQKVTPFMQSLKSLPADYRFDGSPVSDRLENSSGASVRLTNSNVPRKGGLRNGVSRTDTAAGDSEDSPYSGHGVFVEEQSLTDDVDSGAATMPLPQSDERRWSDTSAYARKKILQSWIQLPNGNWELGKILSTSGEESVISLPEGKVIKVISETLVPANPDILDGVDDLMQLSYLNEPSVLYNLNYRYNQDMIYTKAGPVLVAVNPFKEVPLYGNRYIEAYRKKSNESPHVYAIADTAIREMIRDEVNQSIIISGESGAGKTETAKIAMQYLAALGGGSGIEYEILKTNPILEAFGNAKTLRNDNSSRFGKLIEIHFSESGKISGAQIQTFLLEKSRVVQCAEGERSYHIFYQLCAGASPALREKLNLTSAHEYKYLGQSNCYSINGVDDAERFHTVKEALDIVHVSKEDQESVFAMLAAVLWLGNVSFTVIDNENHVEPVADESLSTVAKLIGCNINELTLTLSKRNMRVRNDTIVQKLTLPQAIDARDALAKSIYSCLFDWLVEQINKSLAVGKRRTGRSISILDIYGFESFDKNSFEQFCINYANERLQQHFNRHLFKLEQEEYIQDGIDWTRVDFEDNQNCLSLFEKKPLGLLSLLDEESTFPNGTDLTLANKLKQHLQSNSCFRGDKGKLFTVVHYAGEVTYETTGFLEKNRDLLHSDSIQLLSSCSCLLPQAFASSMLIQSEKPVVGPLYKAGGADSQRLSVATKFKSQLFQLMQRLGNTTPHFIRCIKPNNIQSPGVYEQGLVLQQLRCCGVLEVVRISRSGFPTRMSHQKFSRRYGFLLVENIADRDPLSVSVAILHQFNILPEMYQVGYTKLFFRTGQIGVLEDTRNRTLHGILRVQSSFRGYQARCLLKELKRGISILQSFVRGEKIRKEFAELRRRHKAAATIQSQVKSKIARIQYKGIADASVVIQSAIRGWLVRRCSGDIGWLKSGGAKTNELGEVLVKASVLSELQRRVLKAEAALREKEEENDILQQRLQQYENRWSEYETKMKSMEEIWQKQMRSLQSSLSIAKKSLAVEDSARNSDASVNASDATDWDSSSNQFRSQTSNGVGSRLQPMSAGLSVIGRLAEEFEQRAQVFGDDAKFLVEVKSGQVEANLDPDRELRRLKQMFETWKKDYGGRLRETKLILSKLGSEESSGSMEKVKRKWWGRRNSTRY.

Polar residues predominate over residues 1–13 (MSQKVTPFMQSLK). The disordered stretch occupies residues 1–71 (MSQKVTPFMQ…AGDSEDSPYS (71 aa)). Ser-14 is modified (phosphoserine). Positions 32–45 (NSSGASVRLTNSNV) are enriched in polar residues. In terms of domain architecture, Myosin N-terminal SH3-like spans 112–161 (KKILQSWIQLPNGNWELGKILSTSGEESVISLPEGKVIKVISETLVPANP). The 673-residue stretch at 165 to 837 (DGVDDLMQLS…QIGVLEDTRN (673 aa)) folds into the Myosin motor domain. ATP is bound by residues 256-263 (GESGAGKT) and 304-312 (NDNSSRFGK). Actin-binding regions lie at residues 589-623 (LFEK…KQHL) and 717-739 (LFQL…KPNN). IQ domains follow at residues 839–868 (TLHG…GISI), 862–891 (LKRG…RHKA), 888–917 (RHKA…ASVV), and 911–940 (IADA…LKSG). Residues 955–1005 (SVLSELQRRVLKAEAALREKEEENDILQQRLQQYENRWSEYETKMKSMEEI) adopt a coiled-coil conformation. The tract at residues 1030–1065 (ARNSDASVNASDATDWDSSSNQFRSQTSNGVGSRLQ) is disordered. A compositionally biased stretch (polar residues) spans 1032-1060 (NSDASVNASDATDWDSSSNQFRSQTSNGV).

The protein belongs to the TRAFAC class myosin-kinesin ATPase superfamily. Myosin family. Plant myosin class VIII subfamily. Homodimer.

The protein localises to the cell junction. It is found in the plasmodesma. It localises to the cytoplasm. The protein resides in the cytoskeleton. Its subcellular location is the phragmoplast. The protein localises to the endosome. It is found in the endoplasmic reticulum. Its function is as follows. Myosin heavy chain that is required for the cell cycle-regulated transport of various organelles and proteins for their segregation. Functions by binding with its tail domain to receptor proteins on organelles and exerting force with its N-terminal motor domain against actin filaments, thereby transporting its cargo along polarized actin cables. Involved in endocytosis via its action in endosomal trafficking. The chain is Myosin-1 (VIII-1) from Arabidopsis thaliana (Mouse-ear cress).